A 206-amino-acid chain; its full sequence is Large ribosomal subunit protein uL4 (206 aa).

The protein belongs to the universal ribosomal protein uL4 family. Part of the 50S ribosomal subunit.

Functionally, one of the primary rRNA binding proteins, this protein initially binds near the 5'-end of the 23S rRNA. It is important during the early stages of 50S assembly. It makes multiple contacts with different domains of the 23S rRNA in the assembled 50S subunit and ribosome. Its function is as follows. Forms part of the polypeptide exit tunnel. The chain is Large ribosomal subunit protein uL4 from Rhodopseudomonas palustris (strain BisB5).